We begin with the raw amino-acid sequence, 701 residues long: Acetyl-coenzyme A synthetase, cytoplasmic (701 aa).

A compositionally biased stretch (basic and acidic residues) spans 1-26 (MGLPEERRKSGSGSRAREETGAEGRV). The interval 1 to 37 (MGLPEERRKSGSGSRAREETGAEGRVRGWSPPPEVRR) is disordered. An interaction with TFEB region spans residues 1-107 (MGLPEERRKS…GATTNICYNV (107 aa)). Position 30 is a phosphoserine (Ser30). Residue 219 to 222 (RGEK) coordinates CoA. Phosphoserine occurs at positions 263, 265, and 267. A CoA-binding site is contributed by Thr363. Lys418 bears the N6-acetyllysine mark. Residues 439-441 (GEP), 463-468 (DTFWQT), Asp552, and Arg567 each bind ATP. Positions 575 and 636 each coordinate CoA. Residues 656–668 (KTRSGKIMRRVLR) carry the Nuclear localization signal motif. Ser659 carries the phosphoserine; by AMPK modification. Lys661 bears the N6-acetyllysine mark.

Belongs to the ATP-dependent AMP-binding enzyme family. As to quaternary structure, monomer. Interacts with TFEB. AMPK-mediated phosphorylated form at Ser-659 interacts with KPNA1; this interaction results in nuclear translocation of ACSS2. Interacts with the 'Thr-172' phosphorylated form of PRKAA2. Interacts with CREBBP. Reversibly acetylated at Lys-661. The acetyl-CoA synthase activity is inhibited by acetylation and activated by deacetylation mediated by the deacetylases SIRT1 and SIRT3. Expressed in the hippocampus.

It is found in the cytoplasm. The protein localises to the cytosol. It localises to the nucleus. It catalyses the reaction acetate + ATP + CoA = acetyl-CoA + AMP + diphosphate. The catalysed reaction is propanoate + ATP + CoA = propanoyl-CoA + AMP + diphosphate. With respect to regulation, inhibited by acetylation at Lys-661 and activated by deacetylation mediated by the deacetylases SIRT1 and SIRT3. Its function is as follows. Catalyzes the synthesis of acetyl-CoA from short-chain fatty acids. Acetate is the preferred substrate but can also utilize propionate with a much lower affinity. Nuclear ACSS2 promotes glucose deprivation-induced lysosomal biogenesis and autophagy, tumor cell survival and brain tumorigenesis. Glucose deprivation results in AMPK-mediated phosphorylation of ACSS2 leading to its translocation to the nucleus where it binds to TFEB and locally produces acetyl-CoA for histone acetylation in the promoter regions of TFEB target genes thereby activating their transcription. The regulation of genes associated with autophagy and lysosomal activity through ACSS2 is important for brain tumorigenesis and tumor survival. Acts as a chromatin-bound transcriptional coactivator that up-regulates histone acetylation and expression of neuronal genes. Can be recruited to the loci of memory-related neuronal genes to maintain a local acetyl-CoA pool, providing the substrate for histone acetylation and promoting the expression of specific genes, which is essential for maintaining long-term spatial memory. In Mus musculus (Mouse), this protein is Acetyl-coenzyme A synthetase, cytoplasmic (Acss2).